The sequence spans 253 residues: FGFR1 oncogene partner 2 (253 aa).

The stretch at 5 to 104 (IEKALADAKA…SALELIMSKY (100 aa)) forms a coiled coil. Ser-141 is modified (phosphoserine). The stretch at 160-223 (LERRHLEANQ…LREILQITRE (64 aa)) forms a coiled coil. A disordered region spans residues 231-253 (DDASESTSLSALVTNSDLSLRKS). The segment covering 235–253 (ESTSLSALVTNSDLSLRKS) has biased composition (polar residues).

Belongs to the SIKE family. In terms of tissue distribution, expressed in bone marrow, spleen and thymus.

The protein localises to the cytoplasm. Its function is as follows. May be involved in wound healing pathway. This Homo sapiens (Human) protein is FGFR1 oncogene partner 2 (FGFR1OP2).